Reading from the N-terminus, the 161-residue chain is Vitamin K epoxide reductase complex subunit 1 (161 aa).

Residues 1 to 9 lie on the Cytoplasmic side of the membrane; that stretch reads MGTTWRSPG. A helical transmembrane segment spans residues 10-29; that stretch reads LVRLALCLAGLALSLYALHV. Topologically, residues 30–80 are lumenal; the sequence is KAARARDENYRALCDVGTAISCSRVFSSRWGRGFGLVEHMLGADSVLNQSN. An intrachain disulfide couples Cys-43 to Cys-51. Asn-80 contacts (S)-warfarin. The chain crosses the membrane as a helical span at residues 81-95; that stretch reads SIFGCLFYTLQLLLG. Residues 96 to 100 are Cytoplasmic-facing; sequence CLRGR. Residues 101 to 128 form a helical membrane-spanning segment; the sequence is WASILLVLSSLVSVAGSVYLAWILFFVL. The Lumenal segment spans residues 129–131; it reads YDF. Residues Cys-132 and Cys-135 are joined by a disulfide bond. A helical transmembrane segment spans residues 132-153; sequence CIVCITTYAINVGLMLLSFQKV. Residues Cys-135 and Tyr-139 each coordinate phylloquinone. A (S)-warfarin-binding site is contributed by Tyr-139. The Cytoplasmic segment spans residues 154–161; that stretch reads PEHKTKKH.

This sequence belongs to the VKOR family. Detected in liver.

It is found in the endoplasmic reticulum membrane. It catalyses the reaction phylloquinone + [protein]-disulfide + H2O = 2,3-epoxyphylloquinone + [protein]-dithiol. The enzyme catalyses phylloquinol + [protein]-disulfide = phylloquinone + [protein]-dithiol. Its activity is regulated as follows. Inhibited by warfarin (coumadin). Warfarin locks VKORC1 in both redox states into the closed conformation. Involved in vitamin K metabolism. Catalytic subunit of the vitamin K epoxide reductase (VKOR) complex which reduces inactive vitamin K 2,3-epoxide to active vitamin K. Vitamin K is required for the gamma-carboxylation of various proteins, including clotting factors, and is required for normal blood coagulation, but also for normal bone development. The chain is Vitamin K epoxide reductase complex subunit 1 (Vkorc1) from Mus musculus (Mouse).